The primary structure comprises 169 residues: S-ribosylhomocysteine lyase (169 aa).

Positions 54, 58, and 128 each coordinate Fe cation.

The protein belongs to the LuxS family. In terms of assembly, homodimer. Fe cation is required as a cofactor.

It carries out the reaction S-(5-deoxy-D-ribos-5-yl)-L-homocysteine = (S)-4,5-dihydroxypentane-2,3-dione + L-homocysteine. In terms of biological role, involved in the synthesis of autoinducer 2 (AI-2) which is secreted by bacteria and is used to communicate both the cell density and the metabolic potential of the environment. The regulation of gene expression in response to changes in cell density is called quorum sensing. Catalyzes the transformation of S-ribosylhomocysteine (RHC) to homocysteine (HC) and 4,5-dihydroxy-2,3-pentadione (DPD). This chain is S-ribosylhomocysteine lyase, found in Shewanella loihica (strain ATCC BAA-1088 / PV-4).